Here is a 93-residue protein sequence, read N- to C-terminus: MKTLILLSALVLLAFQVQADPIQNTDEETKTEEQPGEEDQAVSVSFGDPEGASLQEESLRDLVCYCRARGCKGRERMNGTCSKGHLLYMLCCR.

The signal sequence occupies residues 1-19 (MKTLILLSALVLLAFQVQA). Positions 20 to 58 (DPIQNTDEETKTEEQPGEEDQAVSVSFGDPEGASLQEES) are excised as a propeptide. The segment at 23–54 (QNTDEETKTEEQPGEEDQAVSVSFGDPEGASL) is disordered. Disulfide bonds link C64/C92, C66/C81, and C71/C91.

It belongs to the alpha-defensin family.

The protein localises to the secreted. In terms of biological role, may have microbicidal activities. The chain is Alpha-defensin 24 (Defa24) from Mus musculus (Mouse).